Consider the following 467-residue polypeptide: Zinc finger protein mex-6 (467 aa).

Low complexity-rich tracts occupy residues 1 to 22 (MTATSNSAPLAGGSLSSSATAQ) and 179 to 195 (STTRTVPLTSSTPLPTS). Disordered stretches follow at residues 1-35 (MTATSNSAPLAGGSLSSSATAQPPQPPPGHQQQHP) and 163-209 (TNPQ…NRNS). Threonine 190 bears the Phosphothreonine mark. The segment covering 196–207 (REYETVQRDRNR) has biased composition (basic and acidic residues). 2 C3H1-type zinc fingers span residues 273 to 302 (NFKTRLCMTHAAGINPCALGARCKFAHGLK) and 317 to 347 (KYKTKLCKNFARGGSGVCPYGLRCEFVHPSD). Positions 425–451 (INENDLPPHLRRIRRGNPPVTRSRPSF) are disordered. At serine 457 the chain carries Phosphoserine.

Interacts (probably when phosphorylated on Thr-190) with plk-1 (via POLO box domain) and plk-2 (via POLO box domain). Phosphorylation on Ser-457 by par-1 promotes localization of the protein to the anterior cytoplasm of the zygote.

It is found in the cytoplasm. In terms of biological role, functions with mex-5 to affect embryonic viability, establish soma germline asymmetry in embryos and establish plk-1, pie-1, mex-1, and pos-1 asymmetry in embryos. Also affects formation of intestinal cells. The sequence is that of Zinc finger protein mex-6 (mex-6) from Caenorhabditis elegans.